Consider the following 226-residue polypeptide: ATP synthase subunit a (226 aa).

The next 6 membrane-spanning stretches (helical) occupy residues 22–42 (SMNWLFMMLPIIIFPSIFWLI), 73–93 (IIIFISLMLYIMITNIFSLIP), 102–122 (LLLNMILSLTLWFSFLIYLIY), 135–155 (LNSPVFLMNFMVIIELISLII), 173–193 (LILTLLGIFISNFISILPINL), and 202–222 (LEIFMSMIQSYVFSILLILYF).

This sequence belongs to the ATPase A chain family. In terms of assembly, F-type ATPases have 2 components, CF(1) - the catalytic core - and CF(0) - the membrane proton channel. CF(1) has five subunits: alpha(3), beta(3), gamma(1), delta(1), epsilon(1). CF(0) has three main subunits: a, b and c.

It localises to the mitochondrion inner membrane. Mitochondrial membrane ATP synthase (F(1)F(0) ATP synthase or Complex V) produces ATP from ADP in the presence of a proton gradient across the membrane which is generated by electron transport complexes of the respiratory chain. F-type ATPases consist of two structural domains, F(1) - containing the extramembraneous catalytic core and F(0) - containing the membrane proton channel, linked together by a central stalk and a peripheral stalk. During catalysis, ATP synthesis in the catalytic domain of F(1) is coupled via a rotary mechanism of the central stalk subunits to proton translocation. Key component of the proton channel; it may play a direct role in the translocation of protons across the membrane. The polypeptide is ATP synthase subunit a (ATP6) (Apis mellifera ligustica (Common honeybee)).